The sequence spans 225 residues: Imidazole glycerol phosphate synthase subunit HisH (225 aa).

Residues 3 to 225 (TIAIVDYGMG…LYRNFVDWQP (223 aa)) form the Glutamine amidotransferase type-1 domain. The Nucleophile role is filled by Cys82. Active-site residues include His205 and Glu207.

Heterodimer of HisH and HisF.

It localises to the cytoplasm. It carries out the reaction 5-[(5-phospho-1-deoxy-D-ribulos-1-ylimino)methylamino]-1-(5-phospho-beta-D-ribosyl)imidazole-4-carboxamide + L-glutamine = D-erythro-1-(imidazol-4-yl)glycerol 3-phosphate + 5-amino-1-(5-phospho-beta-D-ribosyl)imidazole-4-carboxamide + L-glutamate + H(+). It catalyses the reaction L-glutamine + H2O = L-glutamate + NH4(+). It functions in the pathway amino-acid biosynthesis; L-histidine biosynthesis; L-histidine from 5-phospho-alpha-D-ribose 1-diphosphate: step 5/9. Its function is as follows. IGPS catalyzes the conversion of PRFAR and glutamine to IGP, AICAR and glutamate. The HisH subunit catalyzes the hydrolysis of glutamine to glutamate and ammonia as part of the synthesis of IGP and AICAR. The resulting ammonia molecule is channeled to the active site of HisF. This chain is Imidazole glycerol phosphate synthase subunit HisH, found in Bordetella pertussis (strain Tohama I / ATCC BAA-589 / NCTC 13251).